The sequence spans 467 residues: Light-independent protochlorophyllide reductase subunit N (467 aa).

[4Fe-4S] cluster is bound by residues cysteine 23, cysteine 48, and cysteine 108.

The protein belongs to the BchN/ChlN family. As to quaternary structure, protochlorophyllide reductase is composed of three subunits; ChlL, ChlN and ChlB. Forms a heterotetramer of two ChlB and two ChlN subunits. The cofactor is [4Fe-4S] cluster.

It carries out the reaction chlorophyllide a + oxidized 2[4Fe-4S]-[ferredoxin] + 2 ADP + 2 phosphate = protochlorophyllide a + reduced 2[4Fe-4S]-[ferredoxin] + 2 ATP + 2 H2O. Its pathway is porphyrin-containing compound metabolism; chlorophyll biosynthesis (light-independent). In terms of biological role, component of the dark-operative protochlorophyllide reductase (DPOR) that uses Mg-ATP and reduced ferredoxin to reduce ring D of protochlorophyllide (Pchlide) to form chlorophyllide a (Chlide). This reaction is light-independent. The NB-protein (ChlN-ChlB) is the catalytic component of the complex. This chain is Light-independent protochlorophyllide reductase subunit N, found in Trichormus variabilis (strain ATCC 29413 / PCC 7937) (Anabaena variabilis).